The following is a 265-amino-acid chain: 14-3-3-like protein GF14 nu (265 aa).

Ser67, Ser109, and Ser190 each carry phosphoserine. Thr211 is modified (phosphothreonine). Positions Ala242 to Gln265 are disordered. Over residues Asp245–Gln265 the composition is skewed to basic and acidic residues.

This sequence belongs to the 14-3-3 family. As to quaternary structure, component of the SERK1 signaling complex, composed of KAPP, CDC48A, GRF6 or GRF7, SERK1, SERK2, SERK3/BAK1 and BRI1. Interacts with DREB1A and DREB1B in the nucleus. Interacts with CINV1.

The protein resides in the nucleus. It localises to the cytoplasm. Its function is as follows. Is associated with a DNA binding complex that binds to the G box, a well-characterized cis-acting DNA regulatory element found in plant genes. This is 14-3-3-like protein GF14 nu (GRF7) from Arabidopsis thaliana (Mouse-ear cress).